A 421-amino-acid chain; its full sequence is Testin (421 aa).

The 108-residue stretch at 92-199 (MILTNPVAAR…GDVKLPCELD (108 aa)) folds into the PET domain. Residues 134-164 (KQPVAGSEGAQYRKKQLAKQLPAHDQDPSKC) are disordered. The span at 155–164 (PAHDQDPSKC) shows a compositional bias: basic and acidic residues. LIM zinc-binding domains follow at residues 234–297 (YSCY…CDSE), 299–359 (PRCA…NHAV), and 362–421 (QGCH…KMMS).

The protein belongs to the prickle / espinas / testin family. In terms of assembly, interacts via LIM domain 1 with ZYX. Interacts (via LIM domain 3) with ENAH and VASP. Interacts with ALKBH4, talin, actin, alpha-actinin, GRIP1 and PXN. Interacts (via LIM domain 2) with ACTL7A (via N-terminus). Heterodimer with ACTL7A; the heterodimer interacts with ENAH to form a heterotrimer.

The protein localises to the cytoplasm. Its subcellular location is the cell junction. It localises to the focal adhesion. Scaffold protein that may play a role in cell adhesion, cell spreading and in the reorganization of the actin cytoskeleton. Plays a role in the regulation of cell proliferation. May act as a tumor suppressor. The sequence is that of Testin (TES) from Eulemur macaco macaco (Black lemur).